Consider the following 72-residue polypeptide: Small proline-rich protein 2D (72 aa).

Positions 1-11 are enriched in low complexity; the sequence is MSYQQQQCKQP. Residues 1–20 form a disordered region; it reads MSYQQQQCKQPCQPPPVCPT. 3 tandem repeats follow at residues 21-29, 30-38, and 39-47. Residues 21 to 47 are 3 X 9 AA tandem repeats of P-K-C-P-[EQ]-P-C-P-[PS]; that stretch reads PKCPEPCPPPKCPEPCPSPKCPQPCPP. Pro residues-rich tracts occupy residues 33–47 and 56–72; these read PEPC…PCPP and PVTP…PKSK. The tract at residues 33-72 is disordered; the sequence is PEPCPSPKCPQPCPPQQCQQKYPPVTPSPPCQPKCPPKSK.

This sequence belongs to the cornifin (SPRR) family.

It is found in the cytoplasm. Its function is as follows. Cross-linked envelope protein of keratinocytes. It is a keratinocyte protein that first appears in the cell cytosol, but ultimately becomes cross-linked to membrane proteins by transglutaminase. All that results in the formation of an insoluble envelope beneath the plasma membrane. The protein is Small proline-rich protein 2D (SPRR2D) of Homo sapiens (Human).